A 154-amino-acid chain; its full sequence is Putative pre-16S rRNA nuclease (154 aa).

It belongs to the YqgF nuclease family.

It is found in the cytoplasm. Functionally, could be a nuclease involved in processing of the 5'-end of pre-16S rRNA. The polypeptide is Putative pre-16S rRNA nuclease (Rickettsia conorii (strain ATCC VR-613 / Malish 7)).